We begin with the raw amino-acid sequence, 62 residues long: Mastoparan-AF (62 aa).

An N-terminal signal peptide occupies residues 1-25 (MKNTILILFTAFIALLGFFGMSAEA). AXPX repeat units follow at residues 25 to 28 (ADPI), 29 to 32 (ADPI), 33 to 36 (ADPI), and 43 to 46 (ADPE). Residues 26 to 47 (DPIADPIADPISGPNAEADPEA) constitute a propeptide that is removed on maturation. Phe61 carries the phenylalanine amide modification.

It belongs to the MCD family. Mastoparan subfamily. In terms of tissue distribution, expressed by the venom gland.

Its subcellular location is the secreted. The protein resides in the target cell membrane. Functionally, antimicrobial and mast cell degranulating peptide. Has broad spectrum antibacterial activity against both Gram-positive and Gram-negative bacteria (S.aureus MIC=16-32 ug/ml, S.xylosus MIC=1.5 ug/ml, S.alactolyticus MIC=8 ug/ml, C.koseri MIC=4 ug/ml, E.coli MIC=4-32 ug/ml, K.pneumoniae MIC=32 ug/ml, P.aerugiosa MIC=96 ug/ml, S.choleraesuis MIC=16 ug/ml, S.typhimurium MIC=32 ug/ml, V.parahamelytics MIC=16 ug/ml). Is also active on multi-antibiotic resistant hemolytic E.coli O157:H7. Acts by affecting membrane permeability. On E.coli O157:H7, acts through multiple membrane disruption patterns, including large perforations (full opening) at apical ends (hollow tubes), vesicle budding, forming dents, and membrane corrugation and invagination leading to irregular pits or pores. Exerts 40% lower membrane permeabilization activities on E.coli O157:H7 than on the non-pathogen E.coli BL21. Shows little hemolytic activities on sheep, chicken and human erythrocytes, but with a higher activity on chicken erythrocytes. Its mast cell degranulation activity may be related to the activation of G-protein coupled receptors in mast cells as well as interaction with other proteins located in cell endosomal membranes in the mast cells. This Vespa affinis (Lesser banded hornet) protein is Mastoparan-AF.